The sequence spans 526 residues: Tyrosine-protein kinase transforming protein Src (526 aa).

The tract at residues 1-52 (MGSSKSKPKDPSQRRRSLEPPDSTHHGGFPASQTPDETAAPDAHRNPSRSFG) is disordered. Gly-2 carries the N-myristoyl glycine; by host lipid modification. Residues 7–25 (KPKDPSQRRRSLEPPDSTH) show a composition bias toward basic and acidic residues. The SH3 domain maps to 81 to 142 (GGVTTFVALY…PSNYVAPSDS (62 aa)). Positions 148-245 (WYFGKITRRE…GLCHRLTNVC (98 aa)) constitute an SH2 domain. A Protein kinase domain is found at 267 to 517 (LRLEAKLGQG…TFKYLQAQLL (251 aa)). ATP-binding positions include 273–281 (LGQGCFGEV) and Lys-295. Catalysis depends on Asp-386, which acts as the Proton acceptor. Phosphotyrosine; by autocatalysis is present on Tyr-416.

This sequence belongs to the protein kinase superfamily. Tyr protein kinase family. SRC subfamily. Mn(2+) serves as cofactor. In terms of processing, the phosphorylated form is termed pp60v-src.

The catalysed reaction is L-tyrosyl-[protein] + ATP = O-phospho-L-tyrosyl-[protein] + ADP + H(+). Its function is as follows. This phosphoprotein, required for both the initiation and the maintenance of neoplastic transformation, is a protein kinase that catalyzes the phosphorylation of tyrosine residues in vitro. This chain is Tyrosine-protein kinase transforming protein Src (V-SRC), found in Gallus gallus (Chicken).